The chain runs to 325 residues: Olfactory receptor 6Y1 (325 aa).

Residues 1–30 lie on the Extracellular side of the membrane; the sequence is MTTIILEVDNHTVTTRFILLGFPTRPAFQL. N-linked (GlcNAc...) asparagine glycosylation occurs at N10. Residues 31–51 form a helical membrane-spanning segment; the sequence is LFFSIFLATYLLTLLENLLII. The Cytoplasmic segment spans residues 52 to 59; that stretch reads LAIHSDGQ. The chain crosses the membrane as a helical span at residues 60 to 80; sequence LHKPMYFFLSHLSFLEMWYVT. Residues 81 to 104 are Extracellular-facing; that stretch reads VISPKMLVDFLSHDKSISFNGCMT. An intrachain disulfide couples C102 to C194. The chain crosses the membrane as a helical span at residues 105–125; sequence QLYFFVTFVCTEYILLAIMAF. Over 126-144 the chain is Cytoplasmic; the sequence is DRYVAICNPLRYPVIMTNQ. The helical transmembrane segment at 145-165 threads the bilayer; sequence LCGTLAGGCWFCGLMTAMIKM. At 166–202 the chain is on the extracellular side; that stretch reads VFIAQLHYCGMPQINHYFCDISPLLNVSCEDASQAEM. N191 carries N-linked (GlcNAc...) asparagine glycosylation. Residues 203–222 form a helical membrane-spanning segment; it reads VDFFLALMVIAIPLCVVVAS. Residues 223–242 are Cytoplasmic-facing; it reads YAAILATILRIPSAQGRQKA. The chain crosses the membrane as a helical span at residues 243–263; sequence FSTCASHLTVVILFYSMTLFT. Over 264 to 276 the chain is Extracellular; it reads YARPKLMYAYNSN. Residues 277–297 traverse the membrane as a helical segment; the sequence is KVVSVLYTVIVPLLNPIIYCL. At 298 to 325 the chain is on the cytoplasmic side; it reads RNHEVKAALRKTIHCRGSGPQGNGAFSS.

The protein belongs to the G-protein coupled receptor 1 family.

The protein localises to the cell membrane. Its function is as follows. Odorant receptor. This Homo sapiens (Human) protein is Olfactory receptor 6Y1 (OR6Y1).